The following is a 144-amino-acid chain: Endoribonuclease YbeY (144 aa).

Positions 108, 112, and 118 each coordinate Zn(2+).

The protein belongs to the endoribonuclease YbeY family. Requires Zn(2+) as cofactor.

It localises to the cytoplasm. Its function is as follows. Single strand-specific metallo-endoribonuclease involved in late-stage 70S ribosome quality control and in maturation of the 3' terminus of the 16S rRNA. This is Endoribonuclease YbeY from Phytoplasma australiense.